The primary structure comprises 258 residues: Tetraspanin-15 (258 aa).

Residues methionine 1–tyrosine 20 are Cytoplasmic-facing. The helical transmembrane segment at isoleucine 21–leucine 41 threads the bilayer. The Extracellular segment spans residues leucine 42–arginine 62. Residues isoleucine 63 to phenylalanine 83 traverse the membrane as a helical segment. Residues lysine 84–cysteine 93 are Cytoplasmic-facing. Residues alanine 94–phenylalanine 114 form a helical membrane-spanning segment. Residues arginine 115–aspartate 223 are Extracellular-facing. The helical transmembrane segment at leucine 224–isoleucine 244 threads the bilayer. Residues proline 245–lysine 258 lie on the Cytoplasmic side of the membrane.

It belongs to the tetraspanin (TM4SF) family. In terms of assembly, interacts with doxa-1 and bli-3. Expressed in the body wall (hyp7 hypodermal syncitium), pharynx and vulva. Expressed in a punctate pattern along the thick region of the hypodermis.

The protein resides in the membrane. In terms of biological role, plays a role in cuticle biogenesis. In complex with doxa-1 and the dual oxidase bli-3, promotes the generation of reactive oxygen species (ROS) and tyrosine cross-linking of collagen, thus stabilizing cuticular extracellular matrix. The sequence is that of Tetraspanin-15 from Caenorhabditis elegans.